The primary structure comprises 256 residues: Alcohol dehydrogenase (256 aa).

12 to 35 (FVAGLGGIGLDTSKELVKRDLKNL) contributes to the NAD(+) binding site. Substrate is bound at residue serine 140. Tyrosine 153 (proton acceptor) is an active-site residue.

It belongs to the short-chain dehydrogenases/reductases (SDR) family. Homodimer.

It catalyses the reaction a primary alcohol + NAD(+) = an aldehyde + NADH + H(+). It carries out the reaction a secondary alcohol + NAD(+) = a ketone + NADH + H(+). The polypeptide is Alcohol dehydrogenase (Adh) (Drosophila mauritiana (Fruit fly)).